A 369-amino-acid chain; its full sequence is Probable dual-specificity RNA methyltransferase RlmN (369 aa).

Glu106 serves as the catalytic Proton acceptor. The 237-residue stretch at 118–354 (EARRLTVCVS…VTVRRSRGQD (237 aa)) folds into the Radical SAM core domain. Cys125 and Cys359 form a disulfide bridge. Residues Cys132, Cys136, and Cys139 each contribute to the [4Fe-4S] cluster site. S-adenosyl-L-methionine-binding positions include 183–184 (GE), Ser215, 238–240 (SLH), and Asn316. The active-site S-methylcysteine intermediate is Cys359.

It belongs to the radical SAM superfamily. RlmN family. It depends on [4Fe-4S] cluster as a cofactor.

Its subcellular location is the cytoplasm. It carries out the reaction adenosine(2503) in 23S rRNA + 2 reduced [2Fe-2S]-[ferredoxin] + 2 S-adenosyl-L-methionine = 2-methyladenosine(2503) in 23S rRNA + 5'-deoxyadenosine + L-methionine + 2 oxidized [2Fe-2S]-[ferredoxin] + S-adenosyl-L-homocysteine. It catalyses the reaction adenosine(37) in tRNA + 2 reduced [2Fe-2S]-[ferredoxin] + 2 S-adenosyl-L-methionine = 2-methyladenosine(37) in tRNA + 5'-deoxyadenosine + L-methionine + 2 oxidized [2Fe-2S]-[ferredoxin] + S-adenosyl-L-homocysteine. Functionally, specifically methylates position 2 of adenine 2503 in 23S rRNA and position 2 of adenine 37 in tRNAs. In Salinibacter ruber (strain DSM 13855 / M31), this protein is Probable dual-specificity RNA methyltransferase RlmN.